Consider the following 400-residue polypeptide: Elongation factor Tu (400 aa).

The tr-type G domain maps to 10 to 209 (KPHVNIGTIG…NVDAYIPTPE (200 aa)). The tract at residues 19-26 (GHVDHGKT) is G1. Position 19 to 26 (19 to 26 (GHVDHGKT)) interacts with GTP. Thr26 is a binding site for Mg(2+). Positions 60–64 (GITIN) are G2. The interval 81 to 84 (DCPG) is G3. GTP-binding positions include 81–85 (DCPGH) and 136–139 (NKSD). A G4 region spans residues 136-139 (NKSD). The G5 stretch occupies residues 174 to 176 (SGL).

This sequence belongs to the TRAFAC class translation factor GTPase superfamily. Classic translation factor GTPase family. EF-Tu/EF-1A subfamily. As to quaternary structure, monomer.

It localises to the cytoplasm. The enzyme catalyses GTP + H2O = GDP + phosphate + H(+). Functionally, GTP hydrolase that promotes the GTP-dependent binding of aminoacyl-tRNA to the A-site of ribosomes during protein biosynthesis. In Desulforamulus reducens (strain ATCC BAA-1160 / DSM 100696 / MI-1) (Desulfotomaculum reducens), this protein is Elongation factor Tu.